A 722-amino-acid chain; its full sequence is Golgin subfamily A member 5 (722 aa).

Over M1 to R689 the chain is Cytoplasmic. Disordered regions lie at residues T90 to I158 and T194 to L215. The span at R91–S109 shows a compositional bias: low complexity. Basic and acidic residues predominate over residues D134 to S148. Positions A149 to I158 are enriched in polar residues. Residues L195 to D209 show a composition bias toward low complexity. Residues K211–G622 are a coiled coil. A helical; Anchor for type IV membrane protein membrane pass occupies residues V690–Y710. The Lumenal segment spans residues T711–K722.

Its subcellular location is the golgi apparatus membrane. Involved in maintaining Golgi structure. Stimulates the formation of Golgi stacks and ribbons. Involved in intra-Golgi retrograde transport. The polypeptide is Golgin subfamily A member 5 (golga5) (Xenopus laevis (African clawed frog)).